Reading from the N-terminus, the 963-residue chain is Copalyl diphosphate synthase (963 aa).

The segment at 1–539 (MSPMDLQESA…EAYILAALKR (539 aa)) is type II terpene cyclase (TC). Residues 227-292 (ATQWDDECED…FIEKIRSYLH (66 aa)) form a substrate binding region. Mg(2+)-binding residues include D311 and D314. Positions 311–314 (DADD) match the DXDD motif. The short motif at 333–341 (AMLKEFEEE) is the NSE/DTE element. Substrate-binding positions include 337 to 341 (EFEEE) and 521 to 522 (VT). The interval 540–659 (AADLPDENAE…SVSVHTDHSD (120 aa)) is linker. Residues 627–648 (TNGHYVNGTNHETPLTNGISNG) are compositionally biased toward polar residues. The tract at residues 627–657 (TNGHYVNGTNHETPLTNGISNGDSVSVHTDH) is disordered. Residues 660–963 (SYYQRSDWTA…KILARMSLEL (304 aa)) form a geranylfarnesyl diphosphate synthase (PT) region. K688, R691, and H720 together coordinate isopentenyl diphosphate. D727 and D731 together coordinate Mg(2+). Positions 727–731 (DDIQD) match the DDXXD 1 motif. R736 contributes to the dimethylallyl diphosphate binding site. R737 contacts isopentenyl diphosphate. 6 residues coordinate dimethylallyl diphosphate: K814, T815, Q848, N855, K865, and K875. The short motif at 851–855 (DDYLN) is the DDXXD 2 element.

The protein in the N-terminal section; belongs to the terpene synthase family. This sequence in the C-terminal section; belongs to the FPP/GGPP synthase family. As to quaternary structure, homohexamer. Mg(2+) is required as a cofactor.

It carries out the reaction isopentenyl diphosphate + (2E,6E)-farnesyl diphosphate = (2E,6E,10E)-geranylgeranyl diphosphate + diphosphate. It catalyses the reaction (2E,6E,10E)-geranylgeranyl diphosphate = (+)-copalyl diphosphate. Functionally, bifunctional terpene synthase that possesses both prenyltransferase and type II terpene cyclase activity, converting isopentenyl diphosphate (IPP) and dimethylallyl diphosphate (DMAPP) into geranylgeranyl diphosphate (GGPP) and further converting GGPP into copalyl diphosphate, respectively. This chain is Copalyl diphosphate synthase, found in Talaromyces verruculosus (Penicillium verruculosum).